The sequence spans 2205 residues: Genome polyprotein (2205 aa).

Gly2 is lipidated: N-myristoyl glycine; by host. Residues 2–1518 (GAQVSSQKVG…NINRAMTILQ (1517 aa)) are Cytoplasmic-facing. The tract at residues 579 to 599 (GLGDLIEGVVEGVTRNALTPL) is amphipathic alpha-helix. The span at 598 to 613 (PLTPVNNLPDTRSSGP) shows a compositional bias: polar residues. Residues 598 to 619 (PLTPVNNLPDTRSSGPAHSKET) form a disordered region. Residues His899 and Asp917 each act as for protease 2A activity in the active site. Zn(2+) contacts are provided by Cys934 and Cys936. Residue Cys988 is the For protease 2A activity of the active site. Positions 994 and 996 each coordinate Zn(2+). Residues 1126–1198 (GDSWLKKFTE…HQSCPSQEHQ (73 aa)) form a membrane-binding region. Positions 1126 to 1264 (GDSWLKKFTE…SPGTGKSVAT (139 aa)) are oligomerization. Positions 1147–1151 (SNKIS) are RNA-binding. One can recognise an SF3 helicase domain in the interval 1230–1386 (EHTINNYVQF…SEYSRDGKLN (157 aa)). 1254–1261 (GSPGTGKS) lines the ATP pocket. Residues Cys1394, Cys1397, Cys1406, and Cys1411 each contribute to the Zn(2+) site. Residues 1394-1411 (CKNCHQPANFKRCCPLVC) form a C4-type zinc finger. The RNA-binding stretch occupies residues 1438–1445 (ERNRRSSI). The tract at residues 1449–1454 (MEALFQ) is oligomerization. Residues 1519–1534 (AVTTFAAVAGVVYVMY) lie within the membrane without spanning it. At 1535–2205 (KLFAGHQGAY…TLYRRWLDSF (671 aa)) the chain is on the cytoplasmic side. The residue at position 1544 (Tyr1544) is an O-(5'-phospho-RNA)-tyrosine. In terms of domain architecture, Peptidase C3 spans 1564–1742 (GPGFDYAVAM…FAAALKRSYF (179 aa)). Residues His1603, Glu1634, and Cys1710 each act as for protease 3C activity in the active site. The region spanning 1971–2086 (MEEKLFDYTG…SYPHEVDASL (116 aa)) is the RdRp catalytic domain. 2 residues coordinate Mg(2+): Asp1977 and Asp2072.

This sequence belongs to the picornaviruses polyprotein family. In terms of assembly, interacts with capsid protein VP1 and capsid protein VP3 to form heterotrimeric protomers. Interacts with capsid protein VP0, and capsid protein VP3 to form heterotrimeric protomers. Interacts with human PVR. Five protomers subsequently associate to form pentamers which serve as building blocks for the capsid. Interacts with capsid protein VP2, capsid protein VP3 and capsid protein VP4 following cleavage of capsid protein VP0. As to quaternary structure, interacts with capsid protein VP1 and capsid protein VP3 in the mature capsid. In terms of assembly, interacts with capsid protein VP0 and capsid protein VP1 to form heterotrimeric protomers. Five protomers subsequently associate to form pentamers which serve as building blocks for the capsid. Interacts with capsid protein VP4 in the mature capsid. Interacts with protein 2C; this interaction may be important for virion morphogenesis. Interacts with capsid protein VP1 and capsid protein VP3. As to quaternary structure, homodimer. In terms of assembly, homohexamer; forms a hexameric ring structure with 6-fold symmetry characteristic of AAA+ ATPases. Interacts (via N-terminus) with host RTN3 (via reticulon domain); this interaction is important for viral replication. Interacts with capsid protein VP3; this interaction may be important for virion morphogenesis. Interacts with protein 3CD. As to quaternary structure, homodimer. Interacts with host GBF1. Interacts (via GOLD domain) with host ACBD3 (via GOLD domain); this interaction allows the formation of a viral protein 3A/ACBD3 heterotetramer with a 2:2 stoichiometry, which will stimulate the recruitment of host PI4KB in order to synthesize PI4P at the viral RNA replication sites. In terms of assembly, interacts with RNA-directed RNA polymerase. Interacts with protein 3AB and with RNA-directed RNA polymerase. As to quaternary structure, interacts with Viral protein genome-linked and with protein 3CD. The cofactor is Mg(2+). Specific enzymatic cleavages in vivo by the viral proteases yield processing intermediates and the mature proteins. Post-translationally, myristoylation is required for the formation of pentamers during virus assembly. Further assembly of 12 pentamers and a molecule of genomic RNA generates the provirion. In terms of processing, during virion maturation, immature virions are rendered infectious following cleavage of VP0 into VP4 and VP2. This maturation seems to be an autocatalytic event triggered by the presence of RNA in the capsid and it is followed by a conformational change infectious virion. Myristoylation is required during RNA encapsidation and formation of the mature virus particle. Post-translationally, VPg is uridylylated by the polymerase into VPg-pUpU. This acts as a nucleotide-peptide primer for the genomic RNA replication.

It is found in the virion. The protein resides in the host cytoplasm. Its subcellular location is the host cytoplasmic vesicle membrane. It localises to the host nucleus. It catalyses the reaction a ribonucleoside 5'-triphosphate + H2O = a ribonucleoside 5'-diphosphate + phosphate + H(+). The catalysed reaction is Selective cleavage of Tyr-|-Gly bond in the picornavirus polyprotein.. It carries out the reaction RNA(n) + a ribonucleoside 5'-triphosphate = RNA(n+1) + diphosphate. The enzyme catalyses Selective cleavage of Gln-|-Gly bond in the poliovirus polyprotein. In other picornavirus reactions Glu may be substituted for Gln, and Ser or Thr for Gly.. Replication or transcription is subject to high level of random mutations by the nucleotide analog ribavirin. Forms an icosahedral capsid of pseudo T=3 symmetry with capsid proteins VP2 and VP3. The capsid is 300 Angstroms in diameter, composed of 60 copies of each capsid protein and enclosing the viral positive strand RNA genome. Capsid protein VP1 mainly forms the vertices of the capsid. Capsid protein VP1 interacts with host cell receptor PVR to provide virion attachment to target host cells. This attachment induces virion internalization predominantly through clathrin- and caveolin-independent endocytosis in Hela cells and through caveolin-mediated endocytosis in brain microvascular endothelial cells. Tyrosine kinases are probably involved in the entry process. Virus binding to PVR induces increased junctional permeability and rearrangement of junctional proteins. Modulation of endothelial tight junctions, as well as cytolytic infection of endothelial cells themselves, may result in loss of endothelial integrity which may help the virus to reach the CNS. After binding to its receptor, the capsid undergoes conformational changes. Capsid protein VP1 N-terminus (that contains an amphipathic alpha-helix) and capsid protein VP4 are externalized. Together, they shape a pore in the host membrane through which viral genome is translocated to host cell cytoplasm. In terms of biological role, forms an icosahedral capsid of pseudo T=3 symmetry with capsid proteins VP2 and VP3. The capsid is 300 Angstroms in diameter, composed of 60 copies of each capsid protein and enclosing the viral positive strand RNA genome. Its function is as follows. Lies on the inner surface of the capsid shell. After binding to the host receptor, the capsid undergoes conformational changes. Capsid protein VP4 is released, Capsid protein VP1 N-terminus is externalized, and together, they shape a pore in the host membrane through which the viral genome is translocated into the host cell cytoplasm. Functionally, component of immature procapsids, which is cleaved into capsid proteins VP4 and VP2 after maturation. Allows the capsid to remain inactive before the maturation step. Cysteine protease that cleaves viral polyprotein and specific host proteins. It is responsible for the autocatalytic cleavage between the P1 and P2 regions, which is the first cleavage occurring in the polyprotein. Also cleaves the host translation initiation factor EIF4G1, in order to shut down the capped cellular mRNA translation. Inhibits the host nucleus-cytoplasm protein and RNA trafficking by cleaving host members of the nuclear pores including NUP98, NUP62 and NUP153. Counteracts stress granule formation probably by antagonizing its assembly or promoting its dissassembly. Cleaves and inhibits host IFIH1/MDA5, thereby inhibiting the type-I IFN production and the establishment of the antiviral state. Cleaves and inhibits host MAVS, thereby inhibiting the type-I IFN production and the establishment of the antiviral state. In terms of biological role, plays an essential role in the virus replication cycle by acting as a viroporin. Creates a pore in the host endoplasmic reticulum and as a consequence releases Ca2+ in the cytoplasm of infected cell. In turn, high levels of cytoplasmic calcium may trigger membrane trafficking and transport of viral ER-associated proteins to viroplasms, sites of viral genome replication. Its function is as follows. Induces and associates with structural rearrangements of intracellular membranes. Displays RNA-binding, nucleotide binding and NTPase activities. May play a role in virion morphogenesis and viral RNA encapsidation by interacting with the capsid protein VP3. Functionally, localizes the viral replication complex to the surface of membranous vesicles. Together with protein 3CD binds the Cis-Active RNA Element (CRE) which is involved in RNA synthesis initiation. Acts as a cofactor to stimulate the activity of 3D polymerase, maybe through a nucleid acid chaperone activity. Localizes the viral replication complex to the surface of membranous vesicles. It inhibits host cell endoplasmic reticulum-to-Golgi apparatus transport and causes the disassembly of the Golgi complex, possibly through GBF1 interaction. This would result in depletion of MHC, trail receptors and IFN receptors at the host cell surface. Plays an essential role in viral RNA replication by recruiting ACBD3 and PI4KB at the viral replication sites, thereby allowing the formation of the rearranged membranous structures where viral replication takes place. In terms of biological role, acts as a primer for viral RNA replication and remains covalently bound to viral genomic RNA. VPg is uridylylated prior to priming replication into VPg-pUpU. The oriI viral genomic sequence may act as a template for this. The VPg-pUpU is then used as primer on the genomic RNA poly(A) by the RNA-dependent RNA polymerase to replicate the viral genome. During genome replication, the VPg-RNA linkage is removed by the host TDP2, thereby accelerating replication. During the late stage of the replication cycle, host TDP2 is excluded from sites of viral RNA synthesis and encapsidation, allowing for the generation of progeny virions. Its function is as follows. Involved in the viral replication complex and viral polypeptide maturation. It exhibits protease activity with a specificity and catalytic efficiency that is different from protease 3C. Protein 3CD lacks polymerase activity. Protein 3CD binds to the 5'UTR of the viral genome. Functionally, major viral protease that mediates proteolytic processing of the polyprotein. Cleaves host EIF5B, contributing to host translation shutoff. Also cleaves host PABPC1, contributing to host translation shutoff. Cleaves host RIGI and thus contributes to the inhibition of type I interferon production. Cleaves host NLRP1, triggers host N-glycine-mediated degradation of the autoinhibitory NLRP1 N-terminal fragment. Inhibits the integrated stress response (ISR) in the infected cell by cleaving host G3BP1. Stress granule formation is thus inhibited, which allows protein synthesis and viral replication. Replicates the viral genomic RNA on the surface of intracellular membranes. May form linear arrays of subunits that propagate along a strong head-to-tail interaction called interface-I. Covalently attaches UMP to a tyrosine of VPg, which is used to prime RNA synthesis. The positive stranded RNA genome is first replicated at virus induced membranous vesicles, creating a dsRNA genomic replication form. This dsRNA is then used as template to synthesize positive stranded RNA genomes. ss(+)RNA genomes are either translated, replicated or encapsidated. This is Genome polyprotein from Homo sapiens (Human).